A 288-amino-acid polypeptide reads, in one-letter code: 4-diphosphocytidyl-2-C-methyl-D-erythritol kinase (288 aa).

K10 is an active-site residue. Residue 94–104 (PVAAGLGGGSS) participates in ATP binding. D136 is an active-site residue.

This sequence belongs to the GHMP kinase family. IspE subfamily.

It catalyses the reaction 4-CDP-2-C-methyl-D-erythritol + ATP = 4-CDP-2-C-methyl-D-erythritol 2-phosphate + ADP + H(+). It functions in the pathway isoprenoid biosynthesis; isopentenyl diphosphate biosynthesis via DXP pathway; isopentenyl diphosphate from 1-deoxy-D-xylulose 5-phosphate: step 3/6. Functionally, catalyzes the phosphorylation of the position 2 hydroxy group of 4-diphosphocytidyl-2C-methyl-D-erythritol. The sequence is that of 4-diphosphocytidyl-2-C-methyl-D-erythritol kinase from Lactiplantibacillus plantarum (strain ATCC BAA-793 / NCIMB 8826 / WCFS1) (Lactobacillus plantarum).